The primary structure comprises 285 residues: RNA polymerase sigma factor RpoH (285 aa).

Residues 53–122 (LILSHLRFVI…IHEYVLRNWR (70 aa)) are sigma-70 factor domain-2. The Interaction with polymerase core subunit RpoC signature appears at 77-80 (DLIQ). The tract at residues 229-281 (ALLRLDERSRNIIRARWLDKKEKNTLQKIANNYGISAERVRQLEKNAMKKLKI) is sigma-70 factor domain-4. The segment at residues 254–273 (LQKIANNYGISAERVRQLEK) is a DNA-binding region (H-T-H motif).

This sequence belongs to the sigma-70 factor family. RpoH subfamily. As to quaternary structure, interacts with the RNA polymerase core enzyme.

It localises to the cytoplasm. Functionally, sigma factors are initiation factors that promote the attachment of RNA polymerase to specific initiation sites and are then released. This sigma factor is involved in regulation of expression of heat shock genes. This is RNA polymerase sigma factor RpoH from Buchnera aphidicola subsp. Schizaphis graminum (strain Sg).